The chain runs to 310 residues: Porphobilinogen deaminase (310 aa).

Cys-242 is modified (S-(dipyrrolylmethanemethyl)cysteine).

Belongs to the HMBS family. In terms of assembly, monomer. Dipyrromethane serves as cofactor.

It carries out the reaction 4 porphobilinogen + H2O = hydroxymethylbilane + 4 NH4(+). It functions in the pathway porphyrin-containing compound metabolism; protoporphyrin-IX biosynthesis; coproporphyrinogen-III from 5-aminolevulinate: step 2/4. Functionally, tetrapolymerization of the monopyrrole PBG into the hydroxymethylbilane pre-uroporphyrinogen in several discrete steps. In Psychromonas ingrahamii (strain DSM 17664 / CCUG 51855 / 37), this protein is Porphobilinogen deaminase.